We begin with the raw amino-acid sequence, 136 residues long: Putative covalently bound cell wall protein 22 (136 aa).

The first 18 residues, 1 to 18, serve as a signal peptide directing secretion; sequence MQFSTVASIAAIAAVASA. N-linked (GlcNAc...) asparagine glycans are attached at residues Asn21 and Asn82. Residues 73 to 110 form a disordered region; sequence PLPTTEAPKNTTSPAPTEKPTEKPTEKPTQQGSSTQTV. Residues 99 to 110 show a composition bias toward low complexity; that stretch reads KPTQQGSSTQTV. Gly115 is lipidated: GPI-anchor amidated glycine. The propeptide at 116 to 136 is removed in mature form; that stretch reads AAVKALPAAGALLAGAAALLL.

It belongs to the PGA59 family. The GPI-anchor is attached to the protein in the endoplasmic reticulum and serves to target the protein to the cell surface. There, the glucosamine-inositol phospholipid moiety is cleaved off and the GPI-modified mannoprotein is covalently attached via its lipidless GPI glycan remnant to the 1,6-beta-glucan of the outer cell wall layer.

It localises to the secreted. Its subcellular location is the cell wall. It is found in the membrane. Cell wall protein necessary for cell wall integrity. This Saccharomyces cerevisiae (strain ATCC 204508 / S288c) (Baker's yeast) protein is Putative covalently bound cell wall protein 22 (CCW22).